The sequence spans 104 residues: Pterin-4-alpha-carbinolamine dehydratase (104 aa).

At alanine 2 the chain carries N-acetylalanine. Substrate is bound by residues 61 to 63 (DHH) and 78 to 81 (STHE).

Belongs to the pterin-4-alpha-carbinolamine dehydratase family. As to quaternary structure, homotetramer and homodimer. The major tissues expressing cDcoH are hypothalamus, kidney and liver.

The protein resides in the cytoplasm. It localises to the nucleus. The enzyme catalyses (4aS,6R)-4a-hydroxy-L-erythro-5,6,7,8-tetrahydrobiopterin = (6R)-L-erythro-6,7-dihydrobiopterin + H2O. In terms of biological role, involved in tetrahydrobiopterin biosynthesis. Seems to both prevent the formation of 7-pterins and accelerate the formation of quinonoid-BH2. Coactivator for HNF1A-dependent transcription. Regulates the dimerization of homeodomain protein HNF1A and enhances its transcriptional activity. Also acts as a coactivator for HNF1B-dependent transcription. This is Pterin-4-alpha-carbinolamine dehydratase (PCBD1) from Gallus gallus (Chicken).